A 362-amino-acid polypeptide reads, in one-letter code: Serine/threonine-protein kinase ZRK4 (362 aa).

The segment at 1 to 23 (MNDQKMSCWRKKSKKKNSEANQR) is disordered. Residues 35 to 362 (LEDLIELCNG…KELKRIERWT (328 aa)) form the Protein kinase domain. Residues 41-49 (LCNGKSNPI) and K89 contribute to the ATP site. D185 (proton acceptor) is an active-site residue.

This sequence belongs to the protein kinase superfamily. Ser/Thr protein kinase family. ZRK subfamily.

It carries out the reaction L-seryl-[protein] + ATP = O-phospho-L-seryl-[protein] + ADP + H(+). The catalysed reaction is L-threonyl-[protein] + ATP = O-phospho-L-threonyl-[protein] + ADP + H(+). The sequence is that of Serine/threonine-protein kinase ZRK4 from Arabidopsis thaliana (Mouse-ear cress).